Here is a 732-residue protein sequence, read N- to C-terminus: DNA-directed RNA polymerase subunit beta' (732 aa).

Cysteine 70, cysteine 72, cysteine 85, and cysteine 88 together coordinate Zn(2+). Mg(2+) is bound by residues aspartate 575, aspartate 577, and aspartate 579.

This sequence belongs to the RNA polymerase beta' chain family. RpoC1 subfamily. In plastids the minimal PEP RNA polymerase catalytic core is composed of four subunits: alpha, beta, beta', and beta''. When a (nuclear-encoded) sigma factor is associated with the core the holoenzyme is formed, which can initiate transcription. Mg(2+) serves as cofactor. The cofactor is Zn(2+).

Its subcellular location is the plastid. The protein localises to the chloroplast. It catalyses the reaction RNA(n) + a ribonucleoside 5'-triphosphate = RNA(n+1) + diphosphate. Functionally, DNA-dependent RNA polymerase catalyzes the transcription of DNA into RNA using the four ribonucleoside triphosphates as substrates. This Thalassiosira pseudonana (Marine diatom) protein is DNA-directed RNA polymerase subunit beta'.